The sequence spans 227 residues: UPF0758 protein Dred_2549 (227 aa).

The MPN domain maps to 105-227; it reads IIRCPEDVCG…FTSLKSKGLI (123 aa). H176, H178, and D189 together coordinate Zn(2+). The short motif at 176–189 is the JAMM motif element; the sequence is HNHPSGDPTPSRED.

Belongs to the UPF0758 family.

This chain is UPF0758 protein Dred_2549, found in Desulforamulus reducens (strain ATCC BAA-1160 / DSM 100696 / MI-1) (Desulfotomaculum reducens).